A 455-amino-acid polypeptide reads, in one-letter code: Bifunctional protein GlmU (455 aa).

Residues 1–226 (MSLDIVILAA…AMEVQGANDR (226 aa)) are pyrophosphorylase. UDP-N-acetyl-alpha-D-glucosamine is bound by residues 8-11 (LAAG), Lys-22, Gln-73, 78-79 (GT), 99-101 (YGD), Gly-136, Glu-151, Asn-166, and Asn-224. Asp-101 lines the Mg(2+) pocket. Asn-224 is a Mg(2+) binding site. The tract at residues 227 to 247 (KQLSELERHYQLREARRLMAG) is linker. An N-acetyltransferase region spans residues 248 to 455 (GVTLRDPARF…WKRPVKIRKD (208 aa)). Positions 330 and 348 each coordinate UDP-N-acetyl-alpha-D-glucosamine. The Proton acceptor role is filled by His-360. Tyr-363 and Asn-374 together coordinate UDP-N-acetyl-alpha-D-glucosamine. Residues Ala-377, 383 to 384 (NY), Ser-402, Ala-420, and Arg-437 contribute to the acetyl-CoA site.

This sequence in the N-terminal section; belongs to the N-acetylglucosamine-1-phosphate uridyltransferase family. In the C-terminal section; belongs to the transferase hexapeptide repeat family. As to quaternary structure, homotrimer. Mg(2+) is required as a cofactor.

Its subcellular location is the cytoplasm. The enzyme catalyses alpha-D-glucosamine 1-phosphate + acetyl-CoA = N-acetyl-alpha-D-glucosamine 1-phosphate + CoA + H(+). It catalyses the reaction N-acetyl-alpha-D-glucosamine 1-phosphate + UTP + H(+) = UDP-N-acetyl-alpha-D-glucosamine + diphosphate. It functions in the pathway nucleotide-sugar biosynthesis; UDP-N-acetyl-alpha-D-glucosamine biosynthesis; N-acetyl-alpha-D-glucosamine 1-phosphate from alpha-D-glucosamine 6-phosphate (route II): step 2/2. It participates in nucleotide-sugar biosynthesis; UDP-N-acetyl-alpha-D-glucosamine biosynthesis; UDP-N-acetyl-alpha-D-glucosamine from N-acetyl-alpha-D-glucosamine 1-phosphate: step 1/1. Its pathway is bacterial outer membrane biogenesis; LPS lipid A biosynthesis. In terms of biological role, catalyzes the last two sequential reactions in the de novo biosynthetic pathway for UDP-N-acetylglucosamine (UDP-GlcNAc). The C-terminal domain catalyzes the transfer of acetyl group from acetyl coenzyme A to glucosamine-1-phosphate (GlcN-1-P) to produce N-acetylglucosamine-1-phosphate (GlcNAc-1-P), which is converted into UDP-GlcNAc by the transfer of uridine 5-monophosphate (from uridine 5-triphosphate), a reaction catalyzed by the N-terminal domain. The polypeptide is Bifunctional protein GlmU (Pseudomonas savastanoi pv. phaseolicola (strain 1448A / Race 6) (Pseudomonas syringae pv. phaseolicola (strain 1448A / Race 6))).